Consider the following 485-residue polypeptide: Ribosomal protein uS12 methylthiotransferase RimO (485 aa).

An MTTase N-terminal domain is found at 19-135 (VKVGFISLGC…IGEVVAGILA (117 aa)). 6 residues coordinate [4Fe-4S] cluster: cysteine 28, cysteine 64, cysteine 98, cysteine 172, cysteine 176, and cysteine 179. Residues 158–387 (ATPGYTAYLK…MEVQQEIARR (230 aa)) enclose the Radical SAM core domain. The region spanning 390–461 (QLQVGRELEV…DYDLLGEATE (72 aa)) is the TRAM domain.

It belongs to the methylthiotransferase family. RimO subfamily. Requires [4Fe-4S] cluster as cofactor.

It is found in the cytoplasm. It carries out the reaction L-aspartate(89)-[ribosomal protein uS12]-hydrogen + (sulfur carrier)-SH + AH2 + 2 S-adenosyl-L-methionine = 3-methylsulfanyl-L-aspartate(89)-[ribosomal protein uS12]-hydrogen + (sulfur carrier)-H + 5'-deoxyadenosine + L-methionine + A + S-adenosyl-L-homocysteine + 2 H(+). Catalyzes the methylthiolation of an aspartic acid residue of ribosomal protein uS12. This Symbiobacterium thermophilum (strain DSM 24528 / JCM 14929 / IAM 14863 / T) protein is Ribosomal protein uS12 methylthiotransferase RimO.